We begin with the raw amino-acid sequence, 78 residues long: MARVCQVTGKRPMSGHHVSHANNKTKRRFLPNLQSRRFWLESENRWIRLRLTNAALRTIDKNGIDVVIADMRARGERI.

Residues 1 to 25 (MARVCQVTGKRPMSGHHVSHANNKT) form a disordered region. The span at 13 to 25 (MSGHHVSHANNKT) shows a compositional bias: basic residues.

This sequence belongs to the bacterial ribosomal protein bL28 family.

This Nitrosomonas eutropha (strain DSM 101675 / C91 / Nm57) protein is Large ribosomal subunit protein bL28.